Reading from the N-terminus, the 1214-residue chain is Lysine-specific demethylase 3A (1214 aa).

Phosphoserine is present on residues S150 and S209. Over residues 194-211 (TPSSNRQQNTPQAANSPP) the composition is skewed to polar residues. Disordered regions lie at residues 194–215 (TPSSNRQQNTPQAANSPPNIGA), 271–293 (PKGSCIQPKTNTDQESRLESTPQ), and 310–398 (KAEL…KSVL). S330 carries the post-translational modification Phosphoserine. Residues 361–370 (LGSQSQNLKE) are compositionally biased toward polar residues. Over residues 371 to 380 (TSVKVDHDSC) the composition is skewed to basic and acidic residues. The segment covering 381–391 (CTRSSNKTQTP) has biased composition (polar residues). The segment at 546–571 (CDVCDTTIFNLHWVCPRCGFGVCVDC) adopts a C6-type zinc-finger fold. An LXXLL motif motif is present at residues 769-773 (LRNLL). Residue K779 is modified to N6-acetyllysine. Residues 944-1167 (MPSRFDDLMA…HCFWLTQEFR (224 aa)) enclose the JmjC domain. Positions 1006, 1008, and 1135 each coordinate Fe cation.

It belongs to the JHDM2 histone demethylase family. Interacts with VRK1. Requires Fe(2+) as cofactor. As to expression, testis specific. Expressed only in male germ cells.

Its subcellular location is the cytoplasm. The protein resides in the nucleus. It catalyses the reaction N(6),N(6)-dimethyl-L-lysyl(9)-[histone H3] + 2 2-oxoglutarate + 2 O2 = L-lysyl(9)-[histone H3] + 2 formaldehyde + 2 succinate + 2 CO2. Its function is as follows. Histone demethylase that specifically demethylates 'Lys-9' of histone H3, thereby playing a central role in histone code. Preferentially demethylates mono- and dimethylated H3 'Lys-9' residue, with a preference for dimethylated residue, while it has weak or no activity on trimethylated H3 'Lys-9'. Demethylation of Lys residue generates formaldehyde and succinate. Involved in hormone-dependent transcriptional activation, by participating in recruitment to androgen-receptor target genes, resulting in H3 'Lys-9' demethylation and transcriptional activation. Involved in spermatogenesis by regulating expression of target genes such as PRM1 and TNP1 which are required for packaging and condensation of sperm chromatin. Directly regulates expression of PPARA and UCP1 and is involved in obesity resistance. This is Lysine-specific demethylase 3A (Kdm3a) from Rattus norvegicus (Rat).